Consider the following 139-residue polypeptide: Plastocyanin (139 aa).

Residues 1–34 (MKLIAASLRRLSLAVLTVLLVVSSFAVFTPSASA) form the signal peptide. The 105-residue stretch at 35-139 (ETYTVKLGSD…GMVGKITVAG (105 aa)) folds into the Plastocyanin-like domain. Residues His-73, Cys-123, His-126, and Met-131 each coordinate Cu cation.

It belongs to the plastocyanin family. It depends on Cu(2+) as a cofactor.

The protein localises to the cellular thylakoid membrane. Its function is as follows. Participates in electron transfer between P700 and the cytochrome b6-f complex in photosystem I. The sequence is that of Plastocyanin (petE) from Nostoc sp. (strain PCC 7120 / SAG 25.82 / UTEX 2576).